A 135-amino-acid chain; its full sequence is Germinal center-associated signaling and motility-like protein (135 aa).

The tract at residues 1 to 68 (MGNYLLRKLS…ENGSGSEEVC (68 aa)) is disordered. Residues 22–48 (GNPDEERKRQEMTTFERKLQDQDKKSQ) are compositionally biased toward basic and acidic residues. A coiled-coil region spans residues 26–50 (EERKRQEMTTFERKLQDQDKKSQEV). Over residues 51–66 (SSTSNQENENGSGSEE) the composition is skewed to low complexity.

This chain is Germinal center-associated signaling and motility-like protein (GCSAML), found in Homo sapiens (Human).